Consider the following 127-residue polypeptide: Large ribosomal subunit protein bL20 (127 aa).

This sequence belongs to the bacterial ribosomal protein bL20 family.

Its function is as follows. Binds directly to 23S ribosomal RNA and is necessary for the in vitro assembly process of the 50S ribosomal subunit. It is not involved in the protein synthesizing functions of that subunit. The polypeptide is Large ribosomal subunit protein bL20 (Corynebacterium aurimucosum (strain ATCC 700975 / DSM 44827 / CIP 107346 / CN-1) (Corynebacterium nigricans)).